Reading from the N-terminus, the 280-residue chain is MQPALAPHPSAQDHADQVLHDQLLAAQHQHLTHPQQARPQPPAPQPPHMQPNTPARDQNNIDPAISGATMLTGPPQTPTQPDVTGQETPKTYGKRPLSTSKRAAQNRAAQRAFRQRKEAHIRELEGKVKAYENMGEAIKALQAENYQLREYIINLQSRLLDSQGEVPELPGNIDLSQPRSEIPVPPIPNSGTTTTAAPPPTAPQQPQPPHAQAPTSNDDMNSLNRIAVAGLGMRKPPTEEANYLGNNFQAQARRVRPDEGQTEASELPKQEQTHGLPLIS.

The tract at residues 1–102 (MQPALAPHPS…GKRPLSTSKR (102 aa)) is disordered. Positions 39–49 (PQPPAPQPPHM) are enriched in pro residues. Over residues 79–89 (TQPDVTGQETP) the composition is skewed to polar residues. The bZIP domain occupies 96-159 (PLSTSKRAAQ…EYIINLQSRL (64 aa)). The tract at residues 97–120 (LSTSKRAAQNRAAQRAFRQRKEAH) is basic motif. Residues 124-155 (LEGKVKAYENMGEAIKALQAENYQLREYIINL) are leucine-zipper. Residues 169–280 (LPGNIDLSQP…EQTHGLPLIS (112 aa)) form a disordered region. Pro residues predominate over residues 197–211 (APPPTAPQQPQPPHA).

The protein belongs to the bZIP family.

The protein localises to the nucleus. Its function is as follows. Putative transcription factor. This is Putative transcription factor kapC (kapC) from Neosartorya fischeri (strain ATCC 1020 / DSM 3700 / CBS 544.65 / FGSC A1164 / JCM 1740 / NRRL 181 / WB 181) (Aspergillus fischerianus).